The following is an 82-amino-acid chain: Defensin-like protein 75 (82 aa).

Residues 1–26 form the signal peptide; the sequence is MAKIKSLDVITVAIILLLVIADQATA. Disulfide bonds link Cys33/Cys66, Cys37/Cys55, Cys41/Cys64, and Cys45/Cys65.

This sequence belongs to the DEFL family.

It localises to the secreted. The sequence is that of Defensin-like protein 75 (LCR45) from Arabidopsis thaliana (Mouse-ear cress).